Consider the following 401-residue polypeptide: Voltage-gated potassium channel subunit beta-1 (401 aa).

Residues Thr90, Trp91, Gln97, and Asp119 each contribute to the NADP(+) site. Tyr124 (proton donor/acceptor) is an active-site residue. 17 residues coordinate NADP(+): Asn192, Ser222, Arg223, Gln248, Trp277, Ser278, Pro279, Leu280, Ala281, Cys282, Lys288, Arg298, Gly357, Ser359, Gln363, Glu366, and Asn367.

Belongs to the shaker potassium channel beta subunit family. As to quaternary structure, homotetramer. Interaction with tetrameric potassium channel alpha subunits gives rise to a heterooctamer.

It localises to the cytoplasm. Its subcellular location is the membrane. It is found in the cell membrane. It catalyses the reaction a primary alcohol + NADP(+) = an aldehyde + NADPH + H(+). The catalysed reaction is a secondary alcohol + NADP(+) = a ketone + NADPH + H(+). Regulatory subunit of the voltage-gated potassium (Kv) channels composed of pore-forming and potassium-conducting alpha subunits and of regulatory beta subunits. The beta-1/KCNAB1 cytoplasmic subunit mediates closure of delayed rectifier potassium channels by physically obstructing the pore via its N-terminal domain and increases the speed of channel closure for other family members. Promotes the inactivation of KCNA1, KCNA2, KCNA4, KCNA5 and KCNA6 alpha subunit-containing channels. Displays nicotinamide adenine dinucleotide phosphate (NADPH)-dependent aldoketoreductase activity by catalyzing the NADPH-dependent reduction of a variety of endogenous aldehydes and ketones. The binding of NADPH is required for efficient down-regulation of potassium channel activity. Oxidation of the bound NADPH restrains N-terminal domain from blocking the channel, thereby decreasing N-type inactivation of potassium channel activity. The polypeptide is Voltage-gated potassium channel subunit beta-1 (KCNAB1) (Gallus gallus (Chicken)).